An 868-amino-acid chain; its full sequence is Transcription factor pynR (868 aa).

Residues 11-37 (CTFCRTRKIACSGERICNACRSRSIEC) constitute a DNA-binding region (zn(2)-C6 fungal-type). Disordered stretches follow at residues 51 to 88 (NKTT…TSAV), 662 to 683 (LSGS…LDLS), 715 to 761 (SGIP…ASDL), and 829 to 868 (GMGE…GMSN). Composition is skewed to low complexity over residues 663 to 683 (SGSR…LDLS) and 715 to 727 (SGIP…SISH).

The protein localises to the nucleus. Functionally, transcription factor that regulates the expression of the gene cluster that mediates the biosynthesis of pyranonigrins, a family of antioxidative compounds. The sequence is that of Transcription factor pynR from Aspergillus niger (strain ATCC MYA-4892 / CBS 513.88 / FGSC A1513).